The primary structure comprises 427 residues: MAVLAALLRGGARSRSPLLRRLVQEIRYVERSYVSKPTLKEVVIVSATRTPIGSFLGSLSLLPTTKLGSIAMQGAIEKAGIPKEEVKEAYMGNVLQGGEGQAPARQAVLGAGLPISTPRTTINKVCASGMKAIMMASQSLMCGHQDVMVAGGMESMSNVPYVMNRGSTPYGGVKLEDLIVKDGLTDVYNKIHMGSCAENTAKKLNIARDEQDAYAINSYTRSKAAWEAGKFGNEVIPVTVTVKGQPDVVVKEDEEYKRVDFSKVPKLKTVFQKENGTITAANASTLNDGAAALVLMTAGAAKRLNVTPLARIVAFADAAVEPIDFPIAPVHAVSMVLKDVGLKKEDIAMWEVNEAFSLVVLANIKMLEIDPQKVNINGGAVSLGHPIGMSGARIVGHLTHALKQGEYGLASICNGGGGASAMLIQKL.

A mitochondrion-targeting transit peptide spans 1–33 (MAVLAALLRGGARSRSPLLRRLVQEIRYVERSY). Lys66 is subject to N6-acetyllysine; alternate. Lys66 carries the N6-succinyllysine; alternate modification. Lys78 is modified (N6-succinyllysine). Cys126 serves as the catalytic Acyl-thioester intermediate. Residues Lys174, Lys181, Lys190, and Lys202 each carry the N6-acetyllysine; alternate modification. Lys174, Lys181, Lys190, and Lys202 each carry N6-succinyllysine; alternate. Tyr219 serves as a coordination point for CoA. K(+) is bound at residue Tyr219. An N6-acetyllysine; alternate mark is found at Lys223 and Lys230. N6-succinyllysine; alternate occurs at positions 223 and 230. At Lys243 the chain carries N6-succinyllysine. N6-acetyllysine occurs at positions 251 and 257. CoA-binding positions include 258-260 (RVD) and Lys263. Position 263 is an N6-acetyllysine; alternate (Lys263). Lys263 carries the N6-succinyllysine; alternate modification. N6-succinyllysine occurs at positions 266 and 268. An N6-acetyllysine modification is found at Lys273. Ala280, Ala281, and Ala283 together coordinate K(+). Ser284 is a binding site for CoA. Position 338 is an N6-acetyllysine (Lys338). A K(+)-binding site is contributed by Val381. Residue Cys413 is the Proton donor/acceptor of the active site.

Belongs to the thiolase-like superfamily. Thiolase family. In terms of assembly, homotetramer. In terms of processing, succinylation at Lys-268, adjacent to a coenzyme A binding site. Desuccinylated by SIRT5.

The protein localises to the mitochondrion. The enzyme catalyses 2 acetyl-CoA = acetoacetyl-CoA + CoA. It carries out the reaction propanoyl-CoA + acetyl-CoA = 2-methyl-3-oxobutanoyl-CoA + CoA. It functions in the pathway lipid metabolism; fatty acid beta-oxidation. Activated by potassium ions, but not sodium ions. This is one of the enzymes that catalyzes the last step of the mitochondrial beta-oxidation pathway, an aerobic process breaking down fatty acids into acetyl-CoA. Using free coenzyme A/CoA, catalyzes the thiolytic cleavage of medium- to long-chain 3-oxoacyl-CoAs into acetyl-CoA and a fatty acyl-CoA shortened by two carbon atoms. The activity of the enzyme is reversible and it can also catalyze the condensation of two acetyl-CoA molecules into acetoacetyl-CoA. Thereby, it plays a major role in ketone body metabolism. The sequence is that of Acetyl-CoA acetyltransferase, mitochondrial (ACAT1) from Macaca fascicularis (Crab-eating macaque).